The sequence spans 518 residues: Wax ester synthase/diacylglycerol acyltransferase 6 (518 aa).

The span at 1–17 shows a compositional bias: basic and acidic residues; it reads MEIKTRRDTSETSVRKD. Residues 1 to 29 form a disordered region; that stretch reads MEIKTRRDTSETSVRKDDEEEVEEEQPLS. The Cytoplasmic portion of the chain corresponds to 1-213; the sequence is MEIKTRRDTS…LMAGSRGDSR (213 aa). H163 (proton acceptor) is an active-site residue. A disordered region spans residues 185 to 205; that stretch reads PDELPSLPNQNRSSSRSSRLM. Residues 214–234 traverse the membrane as a helical segment; it reads FLWLVMVIWSAIMLVLNTVCD. At 235–518 the chain is on the lumenal side; the sequence is ALEFIATTMF…VQERDSRSLD (284 aa). A glycan (N-linked (GlcNAc...) asparagine) is linked at N430.

In the N-terminal section; belongs to the long-chain O-acyltransferase family. As to expression, expressed in roots, stems, leaves, flowers and siliques.

It localises to the cell membrane. The protein resides in the endoplasmic reticulum membrane. The protein localises to the golgi apparatus membrane. It carries out the reaction an acyl-CoA + a 1,2-diacyl-sn-glycerol = a triacyl-sn-glycerol + CoA. It catalyses the reaction a long chain fatty alcohol + a fatty acyl-CoA = a wax ester + CoA. It participates in glycerolipid metabolism; triacylglycerol biosynthesis. It functions in the pathway lipid metabolism. Functionally, bifunctional wax ester synthase/diacylglycerol acyltransferase that uses acyl-CoAs with 16, 18 and 20 carbons as substrates, preferably in combination with 16:0ol alcohol. Involved in cuticular wax biosynthesis. The polypeptide is Wax ester synthase/diacylglycerol acyltransferase 6 (Arabidopsis thaliana (Mouse-ear cress)).